A 102-amino-acid chain; its full sequence is Integration host factor subunit alpha (102 aa).

It belongs to the bacterial histone-like protein family. In terms of assembly, heterodimer of an alpha and a beta chain.

Its function is as follows. This protein is one of the two subunits of integration host factor, a specific DNA-binding protein that functions in genetic recombination as well as in transcriptional and translational control. The sequence is that of Integration host factor subunit alpha from Chromohalobacter salexigens (strain ATCC BAA-138 / DSM 3043 / CIP 106854 / NCIMB 13768 / 1H11).